The following is a 299-amino-acid chain: Ribosomal protein L11 methyltransferase (299 aa).

S-adenosyl-L-methionine is bound by residues Thr-152, Gly-172, Asp-194, and Asn-234.

The protein belongs to the methyltransferase superfamily. PrmA family.

It localises to the cytoplasm. It carries out the reaction L-lysyl-[protein] + 3 S-adenosyl-L-methionine = N(6),N(6),N(6)-trimethyl-L-lysyl-[protein] + 3 S-adenosyl-L-homocysteine + 3 H(+). Its function is as follows. Methylates ribosomal protein L11. The sequence is that of Ribosomal protein L11 methyltransferase from Geobacter metallireducens (strain ATCC 53774 / DSM 7210 / GS-15).